The primary structure comprises 244 residues: Large ribosomal subunit protein uL3 (244 aa).

Belongs to the universal ribosomal protein uL3 family. As to quaternary structure, part of the 50S ribosomal subunit. Forms a cluster with proteins L14 and L19.

Functionally, one of the primary rRNA binding proteins, it binds directly near the 3'-end of the 23S rRNA, where it nucleates assembly of the 50S subunit. The sequence is that of Large ribosomal subunit protein uL3 from Aquifex pyrophilus.